Here is a 349-residue protein sequence, read N- to C-terminus: Probable transporter vicT (349 aa).

One can recognise an EamA domain in the interval 25–153; it reads IAAALLHALA…TALAGVVLVL (129 aa). 9 helical membrane-spanning segments follow: residues 49 to 69, 89 to 109, 111 to 131, 133 to 153, 179 to 199, 215 to 235, 244 to 264, 269 to 289, and 294 to 314; these read PFTV…AYLW, AAGG…LSLS, ATVL…YWEG, TFAF…VLVL, LKGV…FSAM, FGVS…EVVW, LLAI…AGLG, RVTI…WAIW, and NVLT…PYLF.

Belongs to the TPT transporter family. SLC35D subfamily.

Its subcellular location is the membrane. In terms of biological role, probable transporter; part of the gene cluster that mediates the biosynthesis of the secondary metabolite victorin, the molecular basis for Victoria blight of oats. This Bipolaris victoriae (strain FI3) (Victoria blight of oats agent) protein is Probable transporter vicT.